A 565-amino-acid chain; its full sequence is CTP synthase (565 aa).

An amidoligase domain region spans residues 1-272 (MARPKNVKHI…DKRVLKKLGI (272 aa)). Ser-18 provides a ligand contact to CTP. A UTP-binding site is contributed by Ser-18. 19 to 24 (SLGKGI) contributes to the ATP binding site. An L-glutamine-binding site is contributed by Tyr-59. Asp-76 is a binding site for ATP. Asp-76 and Glu-146 together coordinate Mg(2+). CTP is bound by residues 153 to 155 (DIE), 193 to 198 (KTKPTQ), and Lys-229. Residues 193-198 (KTKPTQ) and Lys-229 contribute to the UTP site. A Glutamine amidotransferase type-1 domain is found at 299–543 (TIAVCGKYTE…VAAAKAFAFG (245 aa)). Gly-363 serves as a coordination point for L-glutamine. Cys-390 functions as the Nucleophile; for glutamine hydrolysis in the catalytic mechanism. L-glutamine contacts are provided by residues 391–394 (LGMQ), Glu-414, and Arg-471. Catalysis depends on residues His-516 and Glu-518.

It belongs to the CTP synthase family. Homotetramer.

The enzyme catalyses UTP + L-glutamine + ATP + H2O = CTP + L-glutamate + ADP + phosphate + 2 H(+). It catalyses the reaction L-glutamine + H2O = L-glutamate + NH4(+). It carries out the reaction UTP + NH4(+) + ATP = CTP + ADP + phosphate + 2 H(+). The protein operates within pyrimidine metabolism; CTP biosynthesis via de novo pathway; CTP from UDP: step 2/2. Its activity is regulated as follows. Allosterically activated by GTP, when glutamine is the substrate; GTP has no effect on the reaction when ammonia is the substrate. The allosteric effector GTP functions by stabilizing the protein conformation that binds the tetrahedral intermediate(s) formed during glutamine hydrolysis. Inhibited by the product CTP, via allosteric rather than competitive inhibition. Catalyzes the ATP-dependent amination of UTP to CTP with either L-glutamine or ammonia as the source of nitrogen. Regulates intracellular CTP levels through interactions with the four ribonucleotide triphosphates. The sequence is that of CTP synthase from Chlorobium phaeobacteroides (strain BS1).